The primary structure comprises 331 residues: Trans-O-hydroxybenzylidenepyruvate hydratase-aldolase (331 aa).

Belongs to the DapA family.

It carries out the reaction (3E)-4-(2-hydroxyphenyl)-2-oxobut-3-enoate + H2O = salicylaldehyde + pyruvate. The protein operates within aromatic compound metabolism; naphthalene degradation. Functionally, involved in the naphthalene upper catabolic pathway. Catalyzes the transformation of trans-O-hydroxybenzylidenepyruvate (THBPA) to salicylaldehyde and pyruvate. The reaction is reversible. Can also use substrate which carry trans-alpha,beta-unsaturated keto acid side chain and adjacent hydroxyl group such as trans-4-(3-hydroxy-2-thianaphthenyl)-2-oxo-but-3-enoate, trans-4-(3-hydroxy-2-benzofuranyl)-2-oxobut-3-enoate, and trans-4-(3-hydroxy-2-thienyl)-2-oxobut-3-enoate. This chain is Trans-O-hydroxybenzylidenepyruvate hydratase-aldolase (nahE), found in Pseudomonas putida (Arthrobacter siderocapsulatus).